The chain runs to 433 residues: C2H2 type master regulator of conidiophore development brlA (433 aa).

Disordered regions lie at residues 23 to 64 (PSEC…SHYH) and 240 to 265 (KTHTPSTPHRSVSMGTPSGSDTPVSR). The segment covering 30–48 (TSSFSPLDSPTPTPTSLYS) has biased composition (low complexity). The segment covering 240-264 (KTHTPSTPHRSVSMGTPSGSDTPVS) has biased composition (polar residues). 2 C2H2-type zinc fingers span residues 321-345 (FKCKEPGCKGRFKRQEHLKRHMKSH) and 351-376 (HVCWIPGCHRAFSRSDNLNAHYTKTH). Residues 391–416 (ETSQDFDPDFRGQLTPDGRPIYGSKL) are disordered.

It localises to the nucleus. BrlA, abaA and wetA are pivotal regulators of conidiophore development and conidium maturation. They act individually and together to regulate their own expression and that of numerous other sporulation-specific genes. Binds promoters of target genes at brlA response elements (BREs) containing the conserved sequence 5'-(C/A)(A/G)AGGG(G/A)-3'. Is not required for penicillin V production. The protein is C2H2 type master regulator of conidiophore development brlA of Penicillium rubens (strain ATCC 28089 / DSM 1075 / NRRL 1951 / Wisconsin 54-1255) (Penicillium chrysogenum).